Here is an 81-residue protein sequence, read N- to C-terminus: Cysteine-rich and transmembrane domain-containing protein PCC1 (81 aa).

Polar residues predominate over residues 1-22; the sequence is MNQSAQNYFSVQKPSETSSGPY. The tract at residues 1–34 is disordered; that stretch reads MNQSAQNYFSVQKPSETSSGPYTSPPPIGYPTRD. The chain crosses the membrane as a helical span at residues 56 to 74; the sequence is AIMSCFSTCMECIFCCGVC.

It belongs to the CYSTM1 family. Expressed at very low levels in seedlings and petioles, and at higher levels in leaves. Also present in phloem sap.

The protein resides in the cell membrane. Its function is as follows. Modulates resistance against pathogens including oomycetes (e.g. Hyaloperonospora parasitica and Phytophthora brassicae) and fungi (e.g. Phytophthora brassicae). Controls the abscisic acid-mediated (ABA) signaling pathways. Regulator of the flowering time in response to stress (e.g. UV-C). Regulates polar lipid content; promotes phosphatidylinositol (PI) and 18:0 but prevents 18:2 and 18:3 polar lipids accumulation. This is Cysteine-rich and transmembrane domain-containing protein PCC1 (PCC1) from Arabidopsis thaliana (Mouse-ear cress).